Consider the following 483-residue polypeptide: ATP-dependent RNA helicase DDX25 (483 aa).

The Nuclear export signal motif lies at Leu61 to Ser74. The Q motif motif lies at Lys97 to Glu125. The short motif at Glu100–Ala114 is the Nuclear localization signal element. The region spanning Met130–Ile300 is the Helicase ATP-binding domain. Residue Ser143–Thr150 participates in ATP binding. Positions Asp247 to Asp250 match the DEAD box motif. The region spanning Asn311–Ile478 is the Helicase C-terminal domain.

It belongs to the DEAD box helicase family. Phosphorylated on threonine residues. The phosphorylated form is found in the cytoplasm but not in the nucleus.

It is found in the cytoplasm. It localises to the nucleus. The catalysed reaction is ATP + H2O = ADP + phosphate + H(+). In terms of biological role, ATP-dependent RNA helicase. Required for mRNA export and translation regulation during spermatid development. This Bos taurus (Bovine) protein is ATP-dependent RNA helicase DDX25 (DDX25).